The following is a 303-amino-acid chain: Mycothiol acetyltransferase (303 aa).

2 N-acetyltransferase domains span residues 6–134 (TSLA…VEGD) and 154–303 (NEAY…QSSS). Residue Glu37 coordinates 1D-myo-inositol 2-(L-cysteinylamino)-2-deoxy-alpha-D-glucopyranoside. Acetyl-CoA-binding positions include 75-77 (VVV) and 83-88 (RQGYGS). Residues Glu180, Lys221, and Glu233 each coordinate 1D-myo-inositol 2-(L-cysteinylamino)-2-deoxy-alpha-D-glucopyranoside. Residues 237-239 (VGL) and 244-250 (RRRGLGD) each bind acetyl-CoA. Tyr271 lines the 1D-myo-inositol 2-(L-cysteinylamino)-2-deoxy-alpha-D-glucopyranoside pocket. 276–281 (NESARR) contacts acetyl-CoA.

The protein belongs to the acetyltransferase family. MshD subfamily. In terms of assembly, monomer.

The catalysed reaction is 1D-myo-inositol 2-(L-cysteinylamino)-2-deoxy-alpha-D-glucopyranoside + acetyl-CoA = mycothiol + CoA + H(+). Functionally, catalyzes the transfer of acetyl from acetyl-CoA to desacetylmycothiol (Cys-GlcN-Ins) to form mycothiol. The chain is Mycothiol acetyltransferase from Corynebacterium diphtheriae (strain ATCC 700971 / NCTC 13129 / Biotype gravis).